The sequence spans 99 residues: Large ribosomal subunit protein eL21 (99 aa).

This sequence belongs to the eukaryotic ribosomal protein eL21 family.

This is Large ribosomal subunit protein eL21 from Staphylothermus marinus (strain ATCC 43588 / DSM 3639 / JCM 9404 / F1).